The sequence spans 833 residues: Heat shock transcription factor (833 aa).

At methionine 1 the chain carries N-acetylmethionine. Residues methionine 1–serine 16 show a composition bias toward polar residues. Disordered stretches follow at residues methionine 1–aspartate 31 and asparagine 62–leucine 92. Residues serine 69 to phenylalanine 80 show a composition bias toward low complexity. Position 97 is a phosphothreonine (threonine 97). Positions proline 150–glutamine 161 are enriched in polar residues. Disordered regions lie at residues proline 150 to lysine 170 and glycine 277 to asparagine 309. Residues lysine 170–glutamate 259 mediate DNA binding. The tract at residues asparagine 260–asparagine 280 is flexible linker. Residues glycine 277–asparagine 296 show a composition bias toward low complexity. The segment at glutamate 350 to isoleucine 403 is involved in trimerization. The segment covering serine 447–asparagine 457 has biased composition (basic and acidic residues). The interval serine 447–isoleucine 493 is disordered. A phosphoserine mark is found at serine 450, serine 458, serine 471, serine 478, and serine 528. Polar residues predominate over residues serine 458–threonine 487. A compositionally biased stretch (polar residues) spans arginine 542–leucine 554. Disordered stretches follow at residues arginine 542–serine 626, glycine 657–proline 765, and serine 778–asparagine 799. Residues proline 571 to threonine 580 show a composition bias toward acidic residues. Residues arginine 588–aspartate 600 are compositionally biased toward polar residues. Residues aspartate 610–serine 626 show a composition bias toward basic and acidic residues. A compositionally biased stretch (low complexity) spans asparagine 660–asparagine 675. Positions methionine 676–phenylalanine 687 are enriched in polar residues. The segment covering serine 697–serine 713 has biased composition (low complexity). Polar residues-rich tracts occupy residues alanine 727–glycine 739, asparagine 752–valine 763, and serine 778–aspartate 794.

The protein belongs to the HSF family. Homotrimer. Homotrimerization increases the affinity of HSF1 to DNA. Post-translationally, exhibits temperature-dependent phosphorylation that activates the transcriptional capacity.

The protein localises to the nucleus. In terms of biological role, DNA-binding transcription factor that specifically binds heat shock promoter elements (HSE) and activates transcription. This Saccharomyces cerevisiae (strain ATCC 204508 / S288c) (Baker's yeast) protein is Heat shock transcription factor.